The sequence spans 114 residues: Iron-sulfur cluster insertion protein ErpA (114 aa).

Positions 42, 106, and 108 each coordinate iron-sulfur cluster.

It belongs to the HesB/IscA family. As to quaternary structure, homodimer. Iron-sulfur cluster is required as a cofactor.

Required for insertion of 4Fe-4S clusters for at least IspG. The chain is Iron-sulfur cluster insertion protein ErpA from Yersinia pseudotuberculosis serotype O:1b (strain IP 31758).